Reading from the N-terminus, the 310-residue chain is Solute carrier family 25 member 47 (310 aa).

3 Solcar repeats span residues 1–80, 93–208, and 217–304; these read MDFV…CLAH, PTKA…LSEW, and PDVL…VLRL. A run of 6 helical transmembrane segments spans residues 3-23, 49-69, 98-116, 192-212, 219-239, and 275-295; these read FVAG…LDTV, LWGF…VSSV, ITLS…TSPT, GHSF…LTPA, VLGV…VATP, and VLFK…MVVF.

This sequence belongs to the mitochondrial carrier (TC 2.A.29) family.

The protein resides in the mitochondrion inner membrane. It is found in the mitochondrion outer membrane. It carries out the reaction NAD(+)(in) = NAD(+)(out). The catalysed reaction is acetyl-CoA(in) = acetyl-CoA(out). Functionally, mitochondrial NAD(+) transporter that acts as a 'metabolic gate' in hepatic lipogenesis. Provides NAD(+) substrate to mitochondrial SIRT3 deacetylase and enables its NAD(+)-dependent activities in mitochondrial energy metabolism. This triggers downstream activation of PRKAA1/AMPK-alpha signaling cascade that negatively regulates sterol regulatory element-binding protein (SREBP) transcriptional activities and ATP-consuming lipogenesis to restore cellular energy balance. May transport other mitochondrial metabolites having an aromatic nucleotide and phosphate groups, such as acetyl-CoA. Does not transport amino acids. The transport mechanism remains to be elucidated. In Rattus norvegicus (Rat), this protein is Solute carrier family 25 member 47.